The sequence spans 293 residues: Probable 2-(5''-triphosphoribosyl)-3'-dephosphocoenzyme-A synthase (293 aa).

The protein belongs to the CitG/MdcB family.

It carries out the reaction 3'-dephospho-CoA + ATP = 2'-(5''-triphospho-alpha-D-ribosyl)-3'-dephospho-CoA + adenine. Functionally, involved in the formation of 2-(5''-phosphoribosyl)-3'-dephosphocoenzyme-A, the prosthetic group of the acyl-carrier protein of the malonate decarboxylase. The polypeptide is Probable 2-(5''-triphosphoribosyl)-3'-dephosphocoenzyme-A synthase (Pseudomonas aeruginosa (strain UCBPP-PA14)).